Here is a 906-residue protein sequence, read N- to C-terminus: Nuclear factor NF-kappa-B p100 subunit (906 aa).

Residues 34–223 (AVGPYLVIIE…DPIHDSKSPG (190 aa)) form the RHD domain. The short motif at 336-340 (RNRKK) is the Nuclear localization signal element. The interval 345–374 (FPQHFGGGSHMGGAGGAGGFGAGGGGNLSF) is GRR. ANK repeat units lie at residues 472 to 501 (NGDTPLHLAIIHEQTAVIKQLIEVVVSIPS), 511 to 540 (LQQTPLHLAVITKQPQVVQLLLEAHANPTL), 544 to 573 (YGNSLLHLALQAADEEMLRMLLAHLASATP), 582 to 611 (QGLLPVHLAVKAKSPACLDLLVRKGADVNG), 616 to 646 (GGRTPLHLAVEMENLNMATHLVKKLGANVNS), and 650 to 679 (AGNTPLHLAAGLGSPTLTKLLLKAGADVQR). 2 disordered regions span residues 677–734 (VQRE…GPRQ) and 857–906 (EPLE…QQVH). Low complexity predominate over residues 684-695 (PVSPSSVRVPSS). Over residues 697 to 708 (TDGDPEEQEQEQ) the composition is skewed to acidic residues. The Death domain maps to 771 to 857 (RNHLLSLDTD…GAVRMLRKPE (87 aa)).

Component of the NF-kappa-B RelB-p52 complex. While translation occurs, the particular unfolded structure after the GRR repeat promotes the generation of p52 making it an acceptable substrate for the proteasome. This process is known as cotranslational processing. The processed form is active and the unprocessed form acts as an inhibitor (I kappa B-like), being able to form cytosolic complexes with NF-kappa B, trapping it in the cytoplasm. Complete folding of the region downstream of the GRR repeat precludes processing. In terms of processing, constitutive processing is tightly suppressed by its C-terminal processing inhibitory domain, named PID, which contains the death domain.

It localises to the nucleus. The protein localises to the cytoplasm. Functionally, NF-kappa-B is a pleiotropic transcription factor present in almost all cell types and is the endpoint of a series of signal transduction events that are initiated by a vast array of stimuli related to many biological processes such as inflammation, immunity, differentiation, cell growth, tumorigenesis and apoptosis. NF-kappa-B is a homo- or heterodimeric complex formed by the Rel-like domain-containing proteins RELA/p65, RELB, NFKB1/p105, NFKB1/p50, REL and NFKB2/p52. The dimers bind at kappa-B sites in the DNA of their target genes and the individual dimers have distinct preferences for different kappa-B sites that they can bind with distinguishable affinity and specificity. Different dimer combinations act as transcriptional activators or repressors, respectively. NF-kappa-B is controlled by various mechanisms of post-translational modification and subcellular compartmentalization as well as by interactions with other cofactors or corepressors. NF-kappa-B complexes are held in the cytoplasm in an inactive state complexed with members of the NF-kappa-B inhibitor (I-kappa-B) family. In a conventional activation pathway, I-kappa-B is phosphorylated by I-kappa-B kinases (IKKs) in response to different activators, subsequently degraded thus liberating the active NF-kappa-B complex which translocates to the nucleus. In a non-canonical activation pathway, the MAP3K14-activated CHUK/IKKA homodimer phosphorylates NFKB2/p100 associated with RelB, inducing its proteolytic processing to NFKB2/p52 and the formation of NF-kappa-B RelB-p52 complexes. The NF-kappa-B heterodimeric RelB-p52 complex is a transcriptional activator. NFKB2 appears to have dual functions such as cytoplasmic retention of attached NF-kappa-B proteins by p100 and generation of p52 by a cotranslational processing. The proteasome-mediated process ensures the production of both p52 and p100 and preserves their independent function. p52 binds to the kappa-B consensus sequence 5'-GGRNNYYCC-3', located in the enhancer region of genes involved in immune response and acute phase reactions. In concert with RELB, may play a role in the regulation of the circadian clock. This chain is Nuclear factor NF-kappa-B p100 subunit (NFKB2), found in Gallus gallus (Chicken).